The primary structure comprises 430 residues: Tol-Pal system protein TolB (430 aa).

An N-terminal signal peptide occupies residues 1 to 26; that stretch reads MSLMTKLGLRTLVASCLIAVGGAAHA.

Belongs to the TolB family. The Tol-Pal system is composed of five core proteins: the inner membrane proteins TolA, TolQ and TolR, the periplasmic protein TolB and the outer membrane protein Pal. They form a network linking the inner and outer membranes and the peptidoglycan layer.

The protein resides in the periplasm. Part of the Tol-Pal system, which plays a role in outer membrane invagination during cell division and is important for maintaining outer membrane integrity. This is Tol-Pal system protein TolB from Paraburkholderia phytofirmans (strain DSM 17436 / LMG 22146 / PsJN) (Burkholderia phytofirmans).